A 290-amino-acid chain; its full sequence is Probable branched-chain-amino-acid aminotransferase (290 aa).

Lys155 carries the N6-(pyridoxal phosphate)lysine modification.

This sequence belongs to the class-IV pyridoxal-phosphate-dependent aminotransferase family. The cofactor is pyridoxal 5'-phosphate.

It catalyses the reaction L-leucine + 2-oxoglutarate = 4-methyl-2-oxopentanoate + L-glutamate. The enzyme catalyses L-isoleucine + 2-oxoglutarate = (S)-3-methyl-2-oxopentanoate + L-glutamate. It carries out the reaction L-valine + 2-oxoglutarate = 3-methyl-2-oxobutanoate + L-glutamate. The protein operates within amino-acid biosynthesis; L-isoleucine biosynthesis; L-isoleucine from 2-oxobutanoate: step 4/4. It participates in amino-acid biosynthesis; L-leucine biosynthesis; L-leucine from 3-methyl-2-oxobutanoate: step 4/4. Its pathway is amino-acid biosynthesis; L-valine biosynthesis; L-valine from pyruvate: step 4/4. Functionally, acts on leucine, isoleucine and valine. The polypeptide is Probable branched-chain-amino-acid aminotransferase (ilvE) (Rickettsia conorii (strain ATCC VR-613 / Malish 7)).